A 417-amino-acid polypeptide reads, in one-letter code: RH-like protein ID (417 aa).

11 helical membrane-spanning segments follow: residues 12-32 (CLPL…YFFT), 44-64 (LVAS…GFGF), 77-97 (VAFN…LDGF), 125-145 (ISAG…MVLV), 172-192 (IYVF…KPLA), 203-223 (TIPS…WPSF), 238-258 (VFNT…VSSL), 265-285 (INMT…ATSC), 287-307 (LIPS…ISIG), 331-351 (NFSL…VLDT), and 358-378 (MVGF…VIAL).

This sequence belongs to the ammonium transporter (TC 2.A.49) family. Rh subfamily.

It localises to the membrane. May be part of an oligomeric complex which is likely to have a transport or channel function in the erythrocyte membrane. This is RH-like protein ID from Gorilla gorilla gorilla (Western lowland gorilla).